Here is a 223-residue protein sequence, read N- to C-terminus: Deoxyribose-phosphate aldolase (223 aa).

Asp91 serves as the catalytic Proton donor/acceptor. The active-site Schiff-base intermediate with acetaldehyde is the Lys154. The active-site Proton donor/acceptor is Lys183.

It belongs to the DeoC/FbaB aldolase family. DeoC type 1 subfamily.

Its subcellular location is the cytoplasm. The enzyme catalyses 2-deoxy-D-ribose 5-phosphate = D-glyceraldehyde 3-phosphate + acetaldehyde. It functions in the pathway carbohydrate degradation; 2-deoxy-D-ribose 1-phosphate degradation; D-glyceraldehyde 3-phosphate and acetaldehyde from 2-deoxy-alpha-D-ribose 1-phosphate: step 2/2. Its function is as follows. Catalyzes a reversible aldol reaction between acetaldehyde and D-glyceraldehyde 3-phosphate to generate 2-deoxy-D-ribose 5-phosphate. This chain is Deoxyribose-phosphate aldolase, found in Geobacillus thermodenitrificans (strain NG80-2).